The chain runs to 602 residues: Isocitrate dehydrogenase kinase/phosphatase (602 aa).

ATP-binding positions include 327-333 (APGIKGM) and lysine 348. Residue aspartate 383 is part of the active site.

This sequence belongs to the AceK family.

It localises to the cytoplasm. It catalyses the reaction L-seryl-[isocitrate dehydrogenase] + ATP = O-phospho-L-seryl-[isocitrate dehydrogenase] + ADP + H(+). Its function is as follows. Bifunctional enzyme which can phosphorylate or dephosphorylate isocitrate dehydrogenase (IDH) on a specific serine residue. This is a regulatory mechanism which enables bacteria to bypass the Krebs cycle via the glyoxylate shunt in response to the source of carbon. When bacteria are grown on glucose, IDH is fully active and unphosphorylated, but when grown on acetate or ethanol, the activity of IDH declines drastically concomitant with its phosphorylation. This Paraburkholderia phymatum (strain DSM 17167 / CIP 108236 / LMG 21445 / STM815) (Burkholderia phymatum) protein is Isocitrate dehydrogenase kinase/phosphatase.